A 196-amino-acid chain; its full sequence is Holliday junction branch migration complex subunit RuvA (196 aa).

The domain I stretch occupies residues 1–64; that stretch reads MIDRLRGQLV…EDAMLLFGFA (64 aa). The tract at residues 65 to 143 is domain II; the sequence is TREEREAFDA…AAAGGGGGVA (79 aa). Positions 144–153 are flexible linker; it reads AGEGDGPFME. The tract at residues 153–196 is domain III; it reads EAREALTGLGYSLEEAERALRDVPPQETVEQYIKAALRKIGGRR.

The protein belongs to the RuvA family. As to quaternary structure, homotetramer. Forms an RuvA(8)-RuvB(12)-Holliday junction (HJ) complex. HJ DNA is sandwiched between 2 RuvA tetramers; dsDNA enters through RuvA and exits via RuvB. An RuvB hexamer assembles on each DNA strand where it exits the tetramer. Each RuvB hexamer is contacted by two RuvA subunits (via domain III) on 2 adjacent RuvB subunits; this complex drives branch migration. In the full resolvosome a probable DNA-RuvA(4)-RuvB(12)-RuvC(2) complex forms which resolves the HJ.

It localises to the cytoplasm. Functionally, the RuvA-RuvB-RuvC complex processes Holliday junction (HJ) DNA during genetic recombination and DNA repair, while the RuvA-RuvB complex plays an important role in the rescue of blocked DNA replication forks via replication fork reversal (RFR). RuvA specifically binds to HJ cruciform DNA, conferring on it an open structure. The RuvB hexamer acts as an ATP-dependent pump, pulling dsDNA into and through the RuvAB complex. HJ branch migration allows RuvC to scan DNA until it finds its consensus sequence, where it cleaves and resolves the cruciform DNA. The chain is Holliday junction branch migration complex subunit RuvA from Rubrobacter xylanophilus (strain DSM 9941 / JCM 11954 / NBRC 16129 / PRD-1).